Here is a 57-residue protein sequence, read N- to C-terminus: uncharacterized protein (57 aa).

Positions 9–45 (NWQEEIRKIIIERVRREAKKRLLEETRKLRMEMKSSK) form a coiled coil.

This is an uncharacterized protein from Archaeoglobus fulgidus (strain ATCC 49558 / DSM 4304 / JCM 9628 / NBRC 100126 / VC-16).